Here is a 392-residue protein sequence, read N- to C-terminus: Selenide, water dikinase 1 (392 aa).

S2 is modified (N-acetylserine). Residue C31 is part of the active site. Residues K32, 67–69 (GMD), D87, D110, and 161–164 (GGQT) contribute to the ATP site. D69 contacts Mg(2+). Position 110 (D110) interacts with Mg(2+). Position 265 (D265) interacts with Mg(2+).

It belongs to the selenophosphate synthase 1 family. Class II subfamily. As to quaternary structure, homodimer. Requires Mg(2+) as cofactor.

Its subcellular location is the cell membrane. It localises to the nucleus membrane. The catalysed reaction is hydrogenselenide + ATP + H2O = selenophosphate + AMP + phosphate + 2 H(+). In terms of biological role, synthesizes selenophosphate from selenide and ATP. In Mus musculus (Mouse), this protein is Selenide, water dikinase 1 (Sephs1).